A 198-amino-acid polypeptide reads, in one-letter code: Pyridoxal 5'-phosphate synthase subunit PdxT (198 aa).

Position 50 to 52 (50 to 52) interacts with L-glutamine; sequence GES. The active-site Nucleophile is Cys-82. L-glutamine-binding positions include Arg-114 and 143–144; that span reads IR. Residues His-179 and Glu-181 each act as charge relay system in the active site.

The protein belongs to the glutaminase PdxT/SNO family. As to quaternary structure, in the presence of PdxS, forms a dodecamer of heterodimers. Only shows activity in the heterodimer.

The catalysed reaction is aldehydo-D-ribose 5-phosphate + D-glyceraldehyde 3-phosphate + L-glutamine = pyridoxal 5'-phosphate + L-glutamate + phosphate + 3 H2O + H(+). The enzyme catalyses L-glutamine + H2O = L-glutamate + NH4(+). The protein operates within cofactor biosynthesis; pyridoxal 5'-phosphate biosynthesis. Catalyzes the hydrolysis of glutamine to glutamate and ammonia as part of the biosynthesis of pyridoxal 5'-phosphate. The resulting ammonia molecule is channeled to the active site of PdxS. This is Pyridoxal 5'-phosphate synthase subunit PdxT from Metallosphaera sedula (strain ATCC 51363 / DSM 5348 / JCM 9185 / NBRC 15509 / TH2).